The following is a 144-amino-acid chain: GYVNGWNAAEETLEANREAGEFDSSAGAIRNVTHNGCGHILHDLFWQNMSPEGGDEPAGALADRIAEDFGSYDAWKGEFEAAAGAAGGWALLVYDSFSNQLRNVVVDKHDQGALWGSHPILALDVWEHSYYHDYGPARGDFISA.

Positions 42, 124, and 128 each coordinate Mn(2+).

The protein belongs to the iron/manganese superoxide dismutase family. It depends on Mn(2+) as a cofactor.

The catalysed reaction is 2 superoxide + 2 H(+) = H2O2 + O2. Functionally, destroys superoxide anion radicals which are normally produced within the cells and which are toxic to biological systems. The sequence is that of Superoxide dismutase [Mn] 1 (sod1) from Haloferax mediterranei (Halobacterium mediterranei).